The chain runs to 243 residues: UPF0758 protein Ava_0172 (243 aa).

The MPN domain occupies 113–235 (PIDSPVAAVA…HQSLREVTTL (123 aa)). Positions 184, 186, and 197 each coordinate Zn(2+). Positions 184–197 (HNHPSGNVEPSPED) match the JAMM motif motif.

Belongs to the UPF0758 family.

The sequence is that of UPF0758 protein Ava_0172 from Trichormus variabilis (strain ATCC 29413 / PCC 7937) (Anabaena variabilis).